We begin with the raw amino-acid sequence, 193 residues long: Peptidyl-tRNA hydrolase (193 aa).

Y14 contacts tRNA. H19 functions as the Proton acceptor in the catalytic mechanism. F64, N66, and N112 together coordinate tRNA.

It belongs to the PTH family. Monomer.

It localises to the cytoplasm. It catalyses the reaction an N-acyl-L-alpha-aminoacyl-tRNA + H2O = an N-acyl-L-amino acid + a tRNA + H(+). Its function is as follows. Hydrolyzes ribosome-free peptidyl-tRNAs (with 1 or more amino acids incorporated), which drop off the ribosome during protein synthesis, or as a result of ribosome stalling. In terms of biological role, catalyzes the release of premature peptidyl moieties from peptidyl-tRNA molecules trapped in stalled 50S ribosomal subunits, and thus maintains levels of free tRNAs and 50S ribosomes. The protein is Peptidyl-tRNA hydrolase of Bartonella bacilliformis (strain ATCC 35685 / KC583 / Herrer 020/F12,63).